The chain runs to 129 residues: MRHRKSGRQLNRNSSHRQAMFRNMAGSLVRHEIIKTTLPKAKELRRVVEPLITLAKTDNVANRRLAFARTRDNEIVAKLFNELGPRFASRAGGYTRILKCGFRAGDNAPMAYIELVDRAASQAEVVAAE.

It belongs to the bacterial ribosomal protein bL17 family. Part of the 50S ribosomal subunit. Contacts protein L32.

The protein is Large ribosomal subunit protein bL17 of Yersinia pseudotuberculosis serotype O:1b (strain IP 31758).